Consider the following 136-residue polypeptide: MLFSLLELVQWLGFAQLEIFLHISALLVFTVLLALKADGFAPSMSWWNVFIPFFTADGLSTYFTTIVTVRLFQDGEKRQAVLRLFWILTILSLKFIFEMLLCQKLVEQSRELWYGLIMSPIFILLQLLMIRACRVN.

The next 4 helical transmembrane spans lie at Phe-14–Ala-34, Phe-50–Phe-72, Val-81–Leu-101, and Leu-112–Ala-132.

The protein localises to the endoplasmic reticulum membrane. Its subcellular location is the endoplasmic reticulum-Golgi intermediate compartment. Involved in the regulation of cellular calcium homeotasis. May act as a regulator of STING-mediated inflammatory signaling in macrophages. The chain is Transmembrane protein 203 (tmem203) from Xenopus laevis (African clawed frog).